Here is a 153-residue protein sequence, read N- to C-terminus: Putative nuclear shuttle protein (153 aa).

This sequence belongs to the nanoviridae nuclear shuttle protein family.

The protein resides in the host nucleus. It is found in the host cytoplasm. In terms of biological role, putative nuclear shuttle protein. The chain is Putative nuclear shuttle protein (DNA-N) from Cicer arietinum (Chickpea).